The chain runs to 260 residues: Cytochrome c oxidase subunit 3 (260 aa).

6 helical membrane passes run 30-50, 81-101, 126-146, 158-178, 196-216, and 239-259; these read LILWFHINSTILFILGTVLLV, GMILFITSEVCLFFAFFWAFF, FLVPLLNTAVLLSSGVTVTWA, AIQSLTLTVFLGVYFTILQAW, FFVATGFHGLHVLIGTAFLAV, and WYWHFVDVVWLFLYICIYWWG.

The protein belongs to the cytochrome c oxidase subunit 3 family. In terms of assembly, component of the cytochrome c oxidase (complex IV, CIV), a multisubunit enzyme composed of a catalytic core of 3 subunits and several supernumerary subunits. The complex exists as a monomer or a dimer and forms supercomplexes (SCs) in the inner mitochondrial membrane with ubiquinol-cytochrome c oxidoreductase (cytochrome b-c1 complex, complex III, CIII).

It is found in the mitochondrion inner membrane. It carries out the reaction 4 Fe(II)-[cytochrome c] + O2 + 8 H(+)(in) = 4 Fe(III)-[cytochrome c] + 2 H2O + 4 H(+)(out). Component of the cytochrome c oxidase, the last enzyme in the mitochondrial electron transport chain which drives oxidative phosphorylation. The respiratory chain contains 3 multisubunit complexes succinate dehydrogenase (complex II, CII), ubiquinol-cytochrome c oxidoreductase (cytochrome b-c1 complex, complex III, CIII) and cytochrome c oxidase (complex IV, CIV), that cooperate to transfer electrons derived from NADH and succinate to molecular oxygen, creating an electrochemical gradient over the inner membrane that drives transmembrane transport and the ATP synthase. Cytochrome c oxidase is the component of the respiratory chain that catalyzes the reduction of oxygen to water. Electrons originating from reduced cytochrome c in the intermembrane space (IMS) are transferred via the dinuclear copper A center (CU(A)) of subunit 2 and heme A of subunit 1 to the active site in subunit 1, a binuclear center (BNC) formed by heme A3 and copper B (CU(B)). The BNC reduces molecular oxygen to 2 water molecules using 4 electrons from cytochrome c in the IMS and 4 protons from the mitochondrial matrix. The protein is Cytochrome c oxidase subunit 3 (COIII) of Pisaster ochraceus (Ochre sea star).